The following is a 282-amino-acid chain: 2-dehydro-3-deoxyphosphooctonate aldolase (282 aa).

This sequence belongs to the KdsA family.

It localises to the cytoplasm. The catalysed reaction is D-arabinose 5-phosphate + phosphoenolpyruvate + H2O = 3-deoxy-alpha-D-manno-2-octulosonate-8-phosphate + phosphate. It participates in carbohydrate biosynthesis; 3-deoxy-D-manno-octulosonate biosynthesis; 3-deoxy-D-manno-octulosonate from D-ribulose 5-phosphate: step 2/3. The protein operates within bacterial outer membrane biogenesis; lipopolysaccharide biosynthesis. This Bartonella bacilliformis (strain ATCC 35685 / KC583 / Herrer 020/F12,63) protein is 2-dehydro-3-deoxyphosphooctonate aldolase.